The chain runs to 117 residues: Ribonuclease P protein component 4 (117 aa).

The Zn(2+) site is built by cysteine 64, cysteine 67, cysteine 93, and cysteine 96.

The protein belongs to the eukaryotic/archaeal RNase P protein component 4 family. As to quaternary structure, consists of a catalytic RNA component and at least 4-5 protein subunits. The cofactor is Zn(2+).

It is found in the cytoplasm. It catalyses the reaction Endonucleolytic cleavage of RNA, removing 5'-extranucleotides from tRNA precursor.. Its function is as follows. Part of ribonuclease P, a protein complex that generates mature tRNA molecules by cleaving their 5'-ends. This chain is Ribonuclease P protein component 4, found in Pyrococcus abyssi (strain GE5 / Orsay).